A 136-amino-acid chain; its full sequence is MLQPKRMKFRKMHKGRNRGYAAGDSVSFGTFGLKSVGRGRMTARQIEAARRAMTRAVKRQGKIWIRVFPDKPITEKPLEVRQGKGKGNVEYWVCQIQPGRVLYEMEGVPESVAREAFELAASKLPFKTTFVTRTVM.

Belongs to the universal ribosomal protein uL16 family. In terms of assembly, part of the 50S ribosomal subunit.

In terms of biological role, binds 23S rRNA and is also seen to make contacts with the A and possibly P site tRNAs. This Pseudoalteromonas atlantica (strain T6c / ATCC BAA-1087) protein is Large ribosomal subunit protein uL16.